The sequence spans 110 residues: Iron-sulfur cluster assembly protein CyaY (110 aa).

This sequence belongs to the frataxin family.

Involved in iron-sulfur (Fe-S) cluster assembly. May act as a regulator of Fe-S biogenesis. This Pseudomonas fluorescens (strain Pf0-1) protein is Iron-sulfur cluster assembly protein CyaY.